Reading from the N-terminus, the 316-residue chain is Acetylglutamate kinase (316 aa).

Substrate contacts are provided by residues 65-66 (GG), R87, and N179.

Belongs to the acetylglutamate kinase family. ArgB subfamily.

It is found in the cytoplasm. The catalysed reaction is N-acetyl-L-glutamate + ATP = N-acetyl-L-glutamyl 5-phosphate + ADP. It participates in amino-acid biosynthesis; L-arginine biosynthesis; N(2)-acetyl-L-ornithine from L-glutamate: step 2/4. In terms of biological role, catalyzes the ATP-dependent phosphorylation of N-acetyl-L-glutamate. In Alkaliphilus metalliredigens (strain QYMF), this protein is Acetylglutamate kinase.